We begin with the raw amino-acid sequence, 592 residues long: Aspartate--tRNA ligase (592 aa).

L-aspartate is bound at residue Glu-171. Positions 195 to 198 (QLFK) are aspartate. Arg-217 contributes to the L-aspartate binding site. Residues 217-219 (RDE) and Gln-226 contribute to the ATP site. Residue His-448 coordinates L-aspartate. Glu-482 lines the ATP pocket. Residue Arg-489 participates in L-aspartate binding. 534–537 (GLDR) is an ATP binding site.

Belongs to the class-II aminoacyl-tRNA synthetase family. Type 1 subfamily. Homodimer.

It is found in the cytoplasm. It carries out the reaction tRNA(Asp) + L-aspartate + ATP = L-aspartyl-tRNA(Asp) + AMP + diphosphate. Its function is as follows. Catalyzes the attachment of L-aspartate to tRNA(Asp) in a two-step reaction: L-aspartate is first activated by ATP to form Asp-AMP and then transferred to the acceptor end of tRNA(Asp). In Vibrio vulnificus (strain CMCP6), this protein is Aspartate--tRNA ligase.